Consider the following 358-residue polypeptide: Zinc transporter ZIP1 (358 aa).

Topologically, residues 1-7 (MDLLFAK) are extracellular. Residues 8-28 (IICIGIFLVVTTFGCFIPHLM) form a helical membrane-spanning segment. At 29–53 (GLYKEKENEEKNKRVKNILSNLNCF) the chain is on the cytoplasmic side. Residues 54–74 (GSGFIFSIIMFHLLPETIHII) traverse the membrane as a helical segment. Topologically, residues 75–91 (SDHGNIRIFNTSDSQMK) are extracellular. Residues 92–112 (ILYIFFFVFIGFCMQLGLEYV) form a helical membrane-spanning segment. Over 113–186 (LPVDTNICCV…GKFLEILTLQ (74 aa)) the chain is Cytoplasmic. A helical transmembrane segment spans residues 187 to 207 (SFFLTISLAIHSCIEGMIIGT). Residues 208 to 213 (STDVNY) are Extracellular-facing. Residues 214 to 234 (VFISSFCILLHKWIAGVTVSL) form a helical membrane-spanning segment. At 235–246 (SLNSNNMNKTLK) the chain is on the cytoplasmic side. A helical membrane pass occupies residues 247-267 (AILLLTFVFASPLGIVLGHMA). The Extracellular portion of the chain corresponds to 268–273 (KSAGQK). Residues 274–294 (VTCLINAVSIGTLLFIGCEIL) traverse the membrane as a helical segment. Residues 295-310 (LNEIKQNISRKVRLCK) are Cytoplasmic-facing. A helical membrane pass occupies residues 311–331 (WLSFCFSCLIAFALISFTTSM). The Extracellular portion of the chain corresponds to 332–358 (APHTHGDIDTHVHVHHHDHDHDHGHNH).

Belongs to the ZIP transporter (TC 2.A.5) family. In terms of assembly, homodimer.

Its subcellular location is the plastid. It localises to the apicoplast. The protein localises to the cell membrane. The catalysed reaction is Zn(2+)(in) = Zn(2+)(out). It catalyses the reaction Fe(2+)(in) = Fe(2+)(out). In terms of biological role, transporter for the divalent zinc cation. Mediates the influx of zinc into cells from extracellular space. Can transport divalent iron ions. Does not transport manganese and cadmium cations. The polypeptide is Zinc transporter ZIP1 (Plasmodium falciparum (isolate 3D7)).